The sequence spans 150 residues: Large ribosomal subunit protein uL13 (150 aa).

Belongs to the universal ribosomal protein uL13 family. Part of the 50S ribosomal subunit.

This protein is one of the early assembly proteins of the 50S ribosomal subunit, although it is not seen to bind rRNA by itself. It is important during the early stages of 50S assembly. The chain is Large ribosomal subunit protein uL13 from Chlamydia abortus (strain DSM 27085 / S26/3) (Chlamydophila abortus).